The primary structure comprises 515 residues: Probable cytosol aminopeptidase (515 aa).

Lysine 277 and aspartate 282 together coordinate Mn(2+). Lysine 289 is a catalytic residue. The Mn(2+) site is built by aspartate 300, aspartate 359, and glutamate 361. Residue arginine 363 is part of the active site.

This sequence belongs to the peptidase M17 family. The cofactor is Mn(2+).

The protein localises to the cytoplasm. It catalyses the reaction Release of an N-terminal amino acid, Xaa-|-Yaa-, in which Xaa is preferably Leu, but may be other amino acids including Pro although not Arg or Lys, and Yaa may be Pro. Amino acid amides and methyl esters are also readily hydrolyzed, but rates on arylamides are exceedingly low.. The catalysed reaction is Release of an N-terminal amino acid, preferentially leucine, but not glutamic or aspartic acids.. In terms of biological role, presumably involved in the processing and regular turnover of intracellular proteins. Catalyzes the removal of unsubstituted N-terminal amino acids from various peptides. The chain is Probable cytosol aminopeptidase from Streptomyces griseus subsp. griseus (strain JCM 4626 / CBS 651.72 / NBRC 13350 / KCC S-0626 / ISP 5235).